Consider the following 808-residue polypeptide: Protein translocase subunit SecA (808 aa).

Residues glutamine 87, 105 to 109 (GEGKT), and aspartate 493 each bind ATP.

Belongs to the SecA family. As to quaternary structure, monomer and homodimer. Part of the essential Sec protein translocation apparatus which comprises SecA, SecYEG and auxiliary proteins SecDF. Other proteins may also be involved.

It localises to the cell membrane. Its subcellular location is the cytoplasm. The enzyme catalyses ATP + H2O + cellular proteinSide 1 = ADP + phosphate + cellular proteinSide 2.. Functionally, part of the Sec protein translocase complex. Interacts with the SecYEG preprotein conducting channel. Has a central role in coupling the hydrolysis of ATP to the transfer of proteins into and across the cell membrane, serving as an ATP-driven molecular motor driving the stepwise translocation of polypeptide chains across the membrane. This is Protein translocase subunit SecA from Mycoplasma pneumoniae (strain ATCC 29342 / M129 / Subtype 1) (Mycoplasmoides pneumoniae).